We begin with the raw amino-acid sequence, 452 residues long: Zinc finger protein 277 (452 aa).

A C2H2-type 1 zinc finger spans residues 200–224 (LMCLYCEKIFRDRPTLKEHMRKKGH). The interval 248–271 (APTPRKQHLQKRRRETASVSTVAD) is disordered. Over residues 252-261 (RKQHLQKRRR) the composition is skewed to basic residues. A C2H2-type 2 zinc finger spans residues 361–385 (LRCVTCDLQFDEEELLVEHMAQESH).

This sequence belongs to the ZNF277 family. Interacts with components of the origin recognition complex (ORC) complex, Orc2 and Orc3, components of the SAGA transcription coactivator-HAT complex, Gcn5 and e(y)2, components of the mRNP biogenesis THO complex, thoc5 and e(y)2, and a component of the TFIID complex, TBP. Also interacts with polybromo, a component of the chromatin remodeling SWI/SNF complex.

It localises to the nucleus. It is found in the cytoplasm. Functionally, DNA binding protein which is involved in the positive regulation of both basal and inducible transcription. Mainly localizes to active promoter sites and interacts with components of various transcription and replication regulatory complexes, such as the ORC, SAGA, THO, TFIID and SWI/SNF complexes. It may therefore regulate transcription by promoting the association of these complexes to their binding sites. The sequence is that of Zinc finger protein 277 from Drosophila melanogaster (Fruit fly).